Consider the following 257-residue polypeptide: 5-oxoprolinase subunit A (257 aa).

The protein belongs to the LamB/PxpA family. In terms of assembly, forms a complex composed of PxpA, PxpB and PxpC.

It catalyses the reaction 5-oxo-L-proline + ATP + 2 H2O = L-glutamate + ADP + phosphate + H(+). Catalyzes the cleavage of 5-oxoproline to form L-glutamate coupled to the hydrolysis of ATP to ADP and inorganic phosphate. In Pectobacterium atrosepticum (strain SCRI 1043 / ATCC BAA-672) (Erwinia carotovora subsp. atroseptica), this protein is 5-oxoprolinase subunit A.